The following is a 226-amino-acid chain: Orotate phosphoribosyltransferase (226 aa).

Residues arginine 107, lysine 108, lysine 111, and 133 to 141 each bind 5-phospho-alpha-D-ribose 1-diphosphate; that span reads EDLTTDGGS. Threonine 137 provides a ligand contact to orotate.

This sequence belongs to the purine/pyrimidine phosphoribosyltransferase family. PyrE subfamily. As to quaternary structure, homodimer. It depends on Mg(2+) as a cofactor.

The enzyme catalyses orotidine 5'-phosphate + diphosphate = orotate + 5-phospho-alpha-D-ribose 1-diphosphate. The protein operates within pyrimidine metabolism; UMP biosynthesis via de novo pathway; UMP from orotate: step 1/2. In terms of biological role, catalyzes the transfer of a ribosyl phosphate group from 5-phosphoribose 1-diphosphate to orotate, leading to the formation of orotidine monophosphate (OMP). The sequence is that of Orotate phosphoribosyltransferase from Ruegeria sp. (strain TM1040) (Silicibacter sp.).